The primary structure comprises 808 residues: Sucrose synthase 2 (808 aa).

Ser10 is modified (phosphoserine; by CPK). The interval Met272–Thr749 is GT-B glycosyltransferase.

The protein belongs to the glycosyltransferase 1 family. Plant sucrose synthase subfamily. In terms of assembly, homotetramer or heterotetramer with SUS1. Phosphorylated at Ser-10 by CPK23 in developing seeds. In terms of tissue distribution, predominantly expressed in the leaf tissues. Expressed in seeds, and at lower levels in roots. Expressed in leaf mesophyll and phloem (at protein level).

It catalyses the reaction an NDP-alpha-D-glucose + D-fructose = a ribonucleoside 5'-diphosphate + sucrose + H(+). Activated by phosphorylation at Ser-10 by CPK23. Its function is as follows. Sucrose-cleaving enzyme that provides UDP-glucose and fructose for various metabolic pathways. Functions in developing seeds by supplying substrates for the biosynthesis of storage products. The polypeptide is Sucrose synthase 2 (SUS2) (Oryza sativa subsp. japonica (Rice)).